The primary structure comprises 442 residues: D-serine dehydratase (442 aa).

Lys-118 is modified (N6-(pyridoxal phosphate)lysine).

The protein belongs to the serine/threonine dehydratase family. DsdA subfamily. As to quaternary structure, monomer. It depends on pyridoxal 5'-phosphate as a cofactor.

It catalyses the reaction D-serine = pyruvate + NH4(+). The protein is D-serine dehydratase of Shigella flexneri.